Here is a 532-residue protein sequence, read N- to C-terminus: Phosphoenolpyruvate carboxykinase (ATP) (532 aa).

Positions 60, 194, and 200 each coordinate substrate. ATP contacts are provided by residues Lys-200, His-219, and 237–245; that span reads GLSGTGKTT. Lys-200 and His-219 together coordinate Mn(2+). Residue Asp-258 participates in Mn(2+) binding. ATP contacts are provided by Glu-286, Arg-324, and Thr-449. Arg-324 provides a ligand contact to substrate.

It belongs to the phosphoenolpyruvate carboxykinase (ATP) family. Mn(2+) is required as a cofactor.

The protein localises to the cytoplasm. The catalysed reaction is oxaloacetate + ATP = phosphoenolpyruvate + ADP + CO2. It functions in the pathway carbohydrate biosynthesis; gluconeogenesis. Functionally, involved in the gluconeogenesis. Catalyzes the conversion of oxaloacetate (OAA) to phosphoenolpyruvate (PEP) through direct phosphoryl transfer between the nucleoside triphosphate and OAA. The chain is Phosphoenolpyruvate carboxykinase (ATP) from Ruegeria pomeroyi (strain ATCC 700808 / DSM 15171 / DSS-3) (Silicibacter pomeroyi).